The following is a 1444-amino-acid chain: Protein shortage in chiasmata 1 ortholog (1444 aa).

Positions 1106 to 1117 (SITKSPQISSPQ) are enriched in low complexity. The interval 1106-1129 (SITKSPQISSPQENRNQISTLSSQ) is disordered.

The protein belongs to the XPF family. Highly divergent. In terms of assembly, interacts with TEX11. Interacts with SPO16.

It localises to the chromosome. Its function is as follows. ATPase required during meiosis for the formation of crossover recombination intermediates. Binds DNA: preferentially binds to single-stranded DNA and DNA branched structures. Does not show nuclease activity in vitro, but shows ATPase activity, which is stimulated by the presence of single-stranded DNA. Plays a key role in homologous recombination and crossing-over in meiotic prophase I in male and female germ cells. Required for proper synaptonemal complex assembly and homologous chromosome pairing. Requiref for recruitment TEX11 and MSH4 to recombination intermediates. This Homo sapiens (Human) protein is Protein shortage in chiasmata 1 ortholog.